Here is a 378-residue protein sequence, read N- to C-terminus: Stimulator of interferon genes protein (378 aa).

The next 2 membrane-spanning stretches (helical) occupy residues 21 to 41 and 46 to 66; these read AAFV…EPAD and WLVL…LCSL. 2 S-palmitoyl cysteine lipidation sites follow: Cys-88 and Cys-91. 2 consecutive transmembrane segments (helical) span residues 89–109 and 114–134; these read LGCP…YTFL and GLPF…NILL. Residues 153–339 form a cyclic dinucleotide-binding domain (CBD) region; the sequence is FNVAHGLAWS…KHLKQEEKEE (187 aa). 2',3'-cGAMP contacts are provided by Ser-162, Tyr-167, Arg-238, and Thr-263. 3',3'-c-di-GMP-binding positions include Ser-162, Tyr-167, 238–241, and Thr-263; that span reads RVYT. 3 residues coordinate 2',3'-cUAMP: Tyr-167, Arg-238, and Thr-263. Residues 339 to 378 are C-terminal tail (CTT); the sequence is EVTVGTMGSSGVLESSTLDKEPQLLISGMDQPLPLRTDVF. Position 354 is a phosphoserine (Ser-354). Position 355 is a phosphothreonine (Thr-355). The short motif at 362 to 365 is the pLxIS motif element; it reads LLIS. Position 365 is a phosphoserine; by TBK1 (Ser-365).

Belongs to the STING family. As to quaternary structure, homodimer; forms a homodimer in absence of cyclic nucleotide (c-di-GMP or cGAMP). Homotetramer; in presence of cyclic nucleotide (c-di-GMP or cGAMP), forms tetramers and higher-order oligomers through side-by-side packing. Interacts (when phosphorylated) with IRF3; following activation and phosphorylation on the pLxIS motif by TBK1, recruits IRF3. Interacts with TBK1; when homodimer, leading to subsequent production of IFN-beta. In terms of processing, phosphorylation by TBK1 leads to activation and production of IFN-beta. Following cyclic nucleotide (c-di-GMP or cGAMP)-binding, activation and translocation from the endoplasmic reticulum, STING1 is phosphorylated by TBK1 at Ser-365 in the pLxIS motif. The phosphorylated pLxIS motif constitutes an IRF3-binding motif, leading to recruitment of the transcription factor IRF3 to induce type-I interferons and other cytokines. In contrast, lacks phosphorylation site at position 357, leading to reduced production of type-I interferons and other cytokines.

The protein resides in the endoplasmic reticulum membrane. Its subcellular location is the cytoplasm. It is found in the perinuclear region. The protein localises to the endoplasmic reticulum-Golgi intermediate compartment membrane. It localises to the golgi apparatus membrane. The protein resides in the cytoplasmic vesicle. Its subcellular location is the autophagosome membrane. It is found in the mitochondrion outer membrane. The protein localises to the cell membrane. The enzyme catalyses H(+)(in) = H(+)(out). Its function is as follows. Facilitator of innate immune signaling that acts as a sensor of cytosolic DNA from bacteria and viruses and promotes low production of type I interferon (IFN-alpha and IFN-beta). Compared to other mammals, STING1-dependent type I interferon induction is strongly reduced in bats, suggesting that the cGAS-STING pathway promotes a limited inflammatory response. Innate immune response is triggered in response to non-CpG double-stranded DNA from viruses and bacteria delivered to the cytoplasm. Acts by binding cyclic dinucleotides: recognizes and binds cyclic di-GMP (c-di-GMP), a second messenger produced by bacteria, cyclic UMP-AMP (2',3'-cUAMP), and cyclic GMP-AMP (cGAMP), a messenger produced by CGAS in response to DNA virus in the cytosol. Upon binding to c-di-GMP, cUAMP or cGAMP, STING1 oligomerizes, translocates from the endoplasmic reticulum and is phosphorylated by TBK1 on the pLxIS motif, leading to recruitment and subsequent activation of the transcription factor IRF3 to induce expression of type I interferon and exert a potent anti-viral state. In addition to promote the production of type I interferons, plays a direct role in autophagy. Following cGAMP-binding, STING1 buds from the endoplasmic reticulum into COPII vesicles, which then form the endoplasmic reticulum-Golgi intermediate compartment (ERGIC). The ERGIC serves as the membrane source for WIPI2 recruitment and LC3 lipidation, leading to formation of autophagosomes that target cytosolic DNA or DNA viruses for degradation by the lysosome. Promotes autophagy by acting as a proton channel that directs proton efflux from the Golgi to facilitate MAP1LC3B/LC3B lipidation. The autophagy- and interferon-inducing activities can be uncoupled and autophagy induction is independent of TBK1 phosphorylation. This Rhinolophus ferrumequinum (Greater horseshoe bat) protein is Stimulator of interferon genes protein.